We begin with the raw amino-acid sequence, 416 residues long: Prostacyclin receptor (416 aa).

The Extracellular segment spans residues 1 to 45; that stretch reads MVASGGRPDGPPSITPESPLIVGGREWQGMAGSCWNITYVQDSVG. 2 disulfides stabilise this stretch: Cys-34/Cys-194 and Cys-121/Cys-199. N-linked (GlcNAc...) asparagine glycosylation occurs at Asn-36. A helical membrane pass occupies residues 46–67; the sequence is PATSTLMFVAGVVGNGLALGIL. The Cytoplasmic segment spans residues 68 to 80; the sequence is GARRRSHPSAFAV. The chain crosses the membrane as a helical span at residues 81-105; it reads LVTGLAVTDLLGTCFLSPAVFVAYA. Residues 106 to 123 lie on the Extracellular side of the membrane; that stretch reads RNSSLLGLAHGGTMLCDT. Residues 124–144 traverse the membrane as a helical segment; that stretch reads FAFAMTFFGLASTLILFAMAV. Topologically, residues 145–163 are cytoplasmic; sequence ERCLALSHPYLYAQLDGPR. The chain crosses the membrane as a helical span at residues 164–187; that stretch reads CARLALPAIYAFCCLFCSLPLLGL. At 188–215 the chain is on the extracellular side; it reads GEHQQYCPGSWCFIRMRSPQPGGCAFSL. The helical transmembrane segment at 216–237 threads the bilayer; sequence AYASLMALLVTSIFFCNGSVTL. At 238 to 264 the chain is on the cytoplasmic side; sequence SLCHMYRQQRRHHGSFVPTSRAREDEV. A helical membrane pass occupies residues 265–289; sequence YHLILLALMTGIMAVCSLPLTIRGF. The Extracellular portion of the chain corresponds to 290–302; it reads TQAIAPDSREMGD. The helical transmembrane segment at 303–323 threads the bilayer; sequence LHAFRFNAFNPILDPWVFILF. The Cytoplasmic segment spans residues 324–416; that stretch reads RKAVFQRLKF…TEAVVACSLC (93 aa). Residue Ser-366 is modified to Phosphoserine. Cysteine methyl ester is present on Cys-413. Residue Cys-413 is the site of S-farnesyl cysteine attachment. Positions 414 to 416 are cleaved as a propeptide — removed in mature form; that stretch reads SLC.

Belongs to the G-protein coupled receptor 1 family. As to quaternary structure, interacts (non-isoprenylated C-terminus) with PDZK1. In terms of processing, isoprenylation does not influence ligand binding but is required for efficient coupling to the effectors adenylyl cyclase and phospholipase C.

The protein resides in the cell membrane. In terms of biological role, receptor for prostacyclin (prostaglandin I2 or PGI2). The activity of this receptor is mediated by G(s) proteins which activate adenylate cyclase. This is Prostacyclin receptor (Ptgir) from Rattus norvegicus (Rat).